Consider the following 229-residue polypeptide: Putative germin-like protein 3-4 (229 aa).

The signal sequence occupies residues 1 to 31 (MEHSFKTITAGVVFVVLLLQQAPVLIRATDA). Cysteines 38 and 53 form a disulfide. Residues 67-219 (SKIATGGDVN…ALRVDTGVVE (153 aa)) form the Cupin type-1 domain. N-linked (GlcNAc...) asparagine glycosylation is found at N80 and N83. H116, H118, E123, and H165 together coordinate Mn(2+).

The protein belongs to the germin family. In terms of assembly, oligomer (believed to be a pentamer but probably hexamer).

The protein resides in the secreted. The protein localises to the extracellular space. It localises to the apoplast. In terms of biological role, may play a role in plant defense. Probably has no oxalate oxidase activity even if the active site is conserved. The polypeptide is Putative germin-like protein 3-4 (Oryza sativa subsp. japonica (Rice)).